The chain runs to 288 residues: NH(3)-dependent NAD(+) synthetase (288 aa).

46-53 (GISGGQDS) serves as a coordination point for ATP. Residue Asp52 coordinates Mg(2+). Arg153 contributes to the deamido-NAD(+) binding site. Thr173 is a binding site for ATP. Residue Glu178 coordinates Mg(2+). Deamido-NAD(+)-binding residues include Lys186 and Asp193. Positions 202 and 224 each coordinate ATP. 273-274 (HK) contributes to the deamido-NAD(+) binding site.

The protein belongs to the NAD synthetase family. As to quaternary structure, homodimer.

The enzyme catalyses deamido-NAD(+) + NH4(+) + ATP = AMP + diphosphate + NAD(+) + H(+). The protein operates within cofactor biosynthesis; NAD(+) biosynthesis; NAD(+) from deamido-NAD(+) (ammonia route): step 1/1. Its function is as follows. Catalyzes the ATP-dependent amidation of deamido-NAD to form NAD. Uses ammonia as a nitrogen source. The polypeptide is NH(3)-dependent NAD(+) synthetase (Deinococcus geothermalis (strain DSM 11300 / CIP 105573 / AG-3a)).